The following is a 361-amino-acid chain: 5-formaminoimidazole-4-carboxamide-1-(beta)-D-ribofuranosyl 5'-monophosphate synthetase (361 aa).

Residues H27 and S94 each coordinate 5-amino-1-(5-phospho-beta-D-ribosyl)imidazole-4-carboxamide. An ATP-grasp domain is found at 116-348 (RAILRWEAER…MGQRIAREIK (233 aa)). ATP contacts are provided by residues 146–208 (PDDI…ANYC) and E230. Residue N258 participates in 5-amino-1-(5-phospho-beta-D-ribosyl)imidazole-4-carboxamide binding. The Mg(2+) site is built by Q297 and E310.

The protein belongs to the phosphohexose mutase family. Mg(2+) serves as cofactor. Requires Mn(2+) as cofactor.

It carries out the reaction 5-amino-1-(5-phospho-beta-D-ribosyl)imidazole-4-carboxamide + formate + ATP = 5-formamido-1-(5-phospho-D-ribosyl)imidazole-4-carboxamide + ADP + phosphate. It participates in purine metabolism; IMP biosynthesis via de novo pathway; 5-formamido-1-(5-phospho-D-ribosyl)imidazole-4-carboxamide from 5-amino-1-(5-phospho-D-ribosyl)imidazole-4-carboxamide (formate route): step 1/1. In terms of biological role, catalyzes the ATP- and formate-dependent formylation of 5-aminoimidazole-4-carboxamide-1-beta-d-ribofuranosyl 5'-monophosphate (AICAR) to 5-formaminoimidazole-4-carboxamide-1-beta-d-ribofuranosyl 5'-monophosphate (FAICAR) in the absence of folates. The protein is 5-formaminoimidazole-4-carboxamide-1-(beta)-D-ribofuranosyl 5'-monophosphate synthetase of Methanococcus maripaludis (strain C7 / ATCC BAA-1331).